Reading from the N-terminus, the 217-residue chain is Probable disulfide bond formation protein D (217 aa).

The first 28 residues, 1–28, serve as a signal peptide directing secretion; the sequence is MKSSNKLMALGIVFSIAVLIVIGTIVYS. A disulfide bridge connects residues C66 and C69.

It belongs to the thioredoxin family. DsbA subfamily.

Its function is as follows. May be required for disulfide bond formation in some proteins. The polypeptide is Probable disulfide bond formation protein D (bdbD) (Bacillus anthracis).